Reading from the N-terminus, the 212-residue chain is Nascent polypeptide-associated complex subunit alpha (212 aa).

Disordered stretches follow at residues 1 to 54 (MSNP…SRNE) and 123 to 177 (QLAA…EDKD). Residues 22–38 (AEDEGSDSSDSEAEGEE) show a composition bias toward acidic residues. The region spanning 51–116 (SRNEKKARKS…AKIEDLNSQA (66 aa)) is the NAC-A/B domain. Basic and acidic residues predominate over residues 128 to 157 (ESHDHAGHDHSGHDHSHDHGKGKAVDTEEK). Acidic residues predominate over residues 158 to 169 (KEEEEDDTEEVD). A UBA domain is found at 173 to 212 (LEDKDIELVMTQASVSRNKAVKALKENDNDIVNSIMALSI).

Belongs to the NAC-alpha family. As to quaternary structure, part of the nascent polypeptide-associated complex (NAC), consisting of EGD2 and EGD1. NAC associates with ribosomes via EGD1.

Its subcellular location is the cytoplasm. The protein localises to the nucleus. Its function is as follows. Component of the nascent polypeptide-associated complex (NAC), a dynamic component of the ribosomal exit tunnel, protecting the emerging polypeptides from interaction with other cytoplasmic proteins to ensure appropriate nascent protein targeting. The NAC complex also promotes mitochondrial protein import by enhancing productive ribosome interactions with the outer mitochondrial membrane and blocks the inappropriate interaction of ribosomes translating non-secretory nascent polypeptides with translocation sites in the membrane of the endoplasmic reticulum. EGD2 may also be involved in transcription regulation. This is Nascent polypeptide-associated complex subunit alpha (egd2) from Botryotinia fuckeliana (strain B05.10) (Noble rot fungus).